The chain runs to 98 residues: ORF9b protein (98 aa).

A 9b domain is found at 9–98 (VPPALHLVDP…PDEFVVVTAK (90 aa)). The Nuclear export signal signature appears at 46 to 54 (ILRLGSQLS).

This sequence belongs to the coronavirus group 2 protein 9b family. As to quaternary structure, homodimer. Interacts with host XPO1; this interaction mediates protein ORF9b export out of the nucleus. Interacts with host MAVS. Interacts with protein ORF6.

It localises to the virion. The protein localises to the host cytoplasmic vesicle membrane. The protein resides in the host cytoplasm. Its subcellular location is the host endoplasmic reticulum. It is found in the host nucleus. It localises to the host mitochondrion. In terms of biological role, plays a role in the inhibition of host innate immune response by targeting the mitochondrial-associated adapter MAVS. Mechanistically, usurps the E3 ligase ITCH to trigger the degradation of MAVS, TRAF3, and TRAF6. In addition, causes mitochondrial elongation by triggering ubiquitination and proteasomal degradation of dynamin-like protein 1/DNM1L. The protein is ORF9b protein of Homo sapiens (Human).